The following is a 412-amino-acid chain: Putative competence-damage inducible protein (412 aa).

It belongs to the CinA family.

This chain is Putative competence-damage inducible protein, found in Bacillus mycoides (strain KBAB4) (Bacillus weihenstephanensis).